The sequence spans 328 residues: Acetyl-coenzyme A carboxylase carboxyl transferase subunit alpha (328 aa).

Residues 42–296 (SFKEQLSILK…KESLISELHF (255 aa)) enclose the CoA carboxyltransferase C-terminal domain.

This sequence belongs to the AccA family. Acetyl-CoA carboxylase is a heterohexamer composed of biotin carboxyl carrier protein (accB), biotin carboxylase (accC) and two subunits each of ACCase subunit alpha (accA) and ACCase subunit beta (accD).

The protein localises to the plastid. It is found in the chloroplast. The catalysed reaction is N(6)-carboxybiotinyl-L-lysyl-[protein] + acetyl-CoA = N(6)-biotinyl-L-lysyl-[protein] + malonyl-CoA. The protein operates within lipid metabolism; malonyl-CoA biosynthesis; malonyl-CoA from acetyl-CoA: step 1/1. Component of the acetyl coenzyme A carboxylase (ACC) complex. First, biotin carboxylase catalyzes the carboxylation of biotin on its carrier protein (BCCP) and then the CO(2) group is transferred by the carboxyltransferase to acetyl-CoA to form malonyl-CoA. This chain is Acetyl-coenzyme A carboxylase carboxyl transferase subunit alpha, found in Gracilaria tenuistipitata var. liui (Red alga).